A 453-amino-acid chain; its full sequence is GTPase Der (453 aa).

2 EngA-type G domains span residues 4-169 (PIVA…PPAD) and 178-353 (IGVA…EQHR). Residues 10–17 (GRPNVGKS), 57–61 (DTGGL), 120–123 (NKCE), 184–191 (GRPNVGKS), 231–235 (DTAGI), and 296–299 (NKWD) contribute to the GTP site. In terms of domain architecture, KH-like spans 354–439 (RRVGTSVINE…PIRLFWRGKK (86 aa)).

Belongs to the TRAFAC class TrmE-Era-EngA-EngB-Septin-like GTPase superfamily. EngA (Der) GTPase family. As to quaternary structure, associates with the 50S ribosomal subunit.

Functionally, GTPase that plays an essential role in the late steps of ribosome biogenesis. The polypeptide is GTPase Der (Synechococcus sp. (strain ATCC 27144 / PCC 6301 / SAUG 1402/1) (Anacystis nidulans)).